Here is a 595-residue protein sequence, read N- to C-terminus: Adenine deaminase 3 (595 aa).

The protein belongs to the metallo-dependent hydrolases superfamily. Adenine deaminase family. The cofactor is Mn(2+).

The catalysed reaction is adenine + H2O + H(+) = hypoxanthine + NH4(+). In Rhizobium meliloti (strain 1021) (Ensifer meliloti), this protein is Adenine deaminase 3.